The primary structure comprises 183 residues: Large ribosomal subunit protein uL5 (183 aa).

This sequence belongs to the universal ribosomal protein uL5 family. In terms of assembly, part of the 50S ribosomal subunit; contacts the 5S rRNA and probably tRNA. Forms a bridge to the 30S subunit in the 70S ribosome.

In terms of biological role, this is one of the proteins that bind and probably mediate the attachment of the 5S RNA into the large ribosomal subunit, where it forms part of the central protuberance. In the 70S ribosome it contacts protein S13 of the 30S subunit (bridge B1b), connecting the 2 subunits; this bridge is implicated in subunit movement. May contact the P site tRNA; the 5S rRNA and some of its associated proteins might help stabilize positioning of ribosome-bound tRNAs. This chain is Large ribosomal subunit protein uL5, found in Thermococcus kodakarensis (strain ATCC BAA-918 / JCM 12380 / KOD1) (Pyrococcus kodakaraensis (strain KOD1)).